The following is a 511-amino-acid chain: MEQIRRYLQLERFQQHDFLYPXFFQEYIYVFAHGRGFSRSIWSENENTGYDNKSSLRVMKRLITRMYQQNNFIILPNDFNKKNPFLAKKKFFYSQIIAEGFAFIVEIPFSLRFISYLEGKKKIVKSQNLRSIHSIFPFLEDNFSHLNFVLDILILHPVHVEILVQILRYWVKDASSLHLLRFFLNKYWNSLITPNKASSSLSKKNKRLFVFLYNSHVGGYESSFVFIRNQSSHLGSTPFGVLLERIYFYGKIERLVNVFVKVKDFRTNLWFVKEPYIHYIRYQRKWILASKGTFLFVKKWKCYLIIFWQWHFSLWFYPRRIYINQLSNHYFEFLGYLSNLRMTPSVVRSQSLENTFIINNAIKKIDNFVPIISMIASLAKAKFCNVFGHPISKPVRADLSDSNIIDQFGCICRKFFHYYSGSSKKKSLYRIKYILRLACARTLARKHKSTVRTFLKRLGSELLEEFLLSEEDVLFLTFPKASSSLQGVYRSRIWYLDIIYINDLVDHKYKL.

Belongs to the intron maturase 2 family. MatK subfamily.

Its subcellular location is the plastid. Functionally, usually encoded in the trnK tRNA gene intron. Probably assists in splicing its own and other chloroplast group II introns. The polypeptide is Maturase K (Lathraea clandestina (Purple toothwort)).